A 161-amino-acid chain; its full sequence is Ribonuclease H (161 aa).

Residues Gln12–Glu155 enclose the RNase H type-1 domain. Mg(2+) is bound by residues Asp21, Glu59, Asp81, and Asp147.

It belongs to the RNase H family. As to quaternary structure, monomer. Requires Mg(2+) as cofactor.

It localises to the cytoplasm. It carries out the reaction Endonucleolytic cleavage to 5'-phosphomonoester.. In terms of biological role, endonuclease that specifically degrades the RNA of RNA-DNA hybrids. This is Ribonuclease H from Polaromonas naphthalenivorans (strain CJ2).